The following is a 346-amino-acid chain: Porphobilinogen deaminase (346 aa).

Cys242 carries the S-(dipyrrolylmethanemethyl)cysteine modification. Residues 317-346 (ATEPGARSGTGAVRPPETDLSNPSPMENPQ) are disordered. A compositionally biased stretch (polar residues) spans 335–346 (DLSNPSPMENPQ).

It belongs to the HMBS family. In terms of assembly, monomer. Dipyrromethane serves as cofactor.

It carries out the reaction 4 porphobilinogen + H2O = hydroxymethylbilane + 4 NH4(+). Its pathway is porphyrin-containing compound metabolism; protoporphyrin-IX biosynthesis; coproporphyrinogen-III from 5-aminolevulinate: step 2/4. Tetrapolymerization of the monopyrrole PBG into the hydroxymethylbilane pre-uroporphyrinogen in several discrete steps. The polypeptide is Porphobilinogen deaminase (Nocardia farcinica (strain IFM 10152)).